The sequence spans 125 residues: MPHSSDSSDSSFSRSPPPGKQDSSDDVRKVQRREKNRIAAQKSRQRQTQKADTLHLESEDLEKQNAALRKEIKQLTEELKYFTSVLSSHEPLCSVLASGTPSPPEVVYSAHAFHQPHISSPRFQP.

The segment covering 1-14 has biased composition (low complexity); it reads MPHSSDSSDSSFSR. Residues 1-59 are disordered; sequence MPHSSDSSDSSFSRSPPPGKQDSSDDVRKVQRREKNRIAAQKSRQRQTQKADTLHLESE. In terms of domain architecture, bZIP spans 26–89; sequence DVRKVQRREK…KYFTSVLSSH (64 aa). A basic motif region spans residues 28-50; that stretch reads RKVQRREKNRIAAQKSRQRQTQK. S43 carries the phosphoserine modification. T48 is subject to Phosphothreonine. The tract at residues 54 to 75 is leucine-zipper; that stretch reads LHLESEDLEKQNAALRKEIKQL.

This sequence belongs to the bZIP family. As to quaternary structure, heterodimer; mainly heterodimerizes with JUNB. The BATF-JUNB heterodimer interacts with IRF4 and IRF8. Interacts (via bZIP domain) with IRF4 and IRF8; the interaction is direct. Also forms heterodimers with JUN and JUND. Interacts with IFI35. Post-translationally, phosphorylated on serine and threonine residues and at least one tyrosine residue. Phosphorylation at Ser-43 inhibit DNA binding activity and transforms it as a negative regulator of AP-1 mediated transcription. Detected in postnatal and adult lymphoid tissues such as thymus, spleen and lymph nodes. In thymus most concentrated expression is found in the immediate cortical layer. Differentially expressed during T-cell development in thymus. Highly expressed in Th17, Th1 and Th2 cells and in activated B-cells.

It is found in the nucleus. It localises to the cytoplasm. Its function is as follows. AP-1 family transcription factor that controls the differentiation of lineage-specific cells in the immune system: specifically mediates the differentiation of T-helper 17 cells (Th17), follicular T-helper cells (TfH), CD8(+) dendritic cells and class-switch recombination (CSR) in B-cells. Acts via the formation of a heterodimer with JUNB that recognizes and binds DNA sequence 5'-TGA[CG]TCA-3'. The BATF-JUNB heterodimer also forms a complex with IRF4 (or IRF8) in immune cells, leading to recognition of AICE sequence (5'-TGAnTCA/GAAA-3'), an immune-specific regulatory element, followed by cooperative binding of BATF and IRF4 (or IRF8) and activation of genes. Controls differentiation of T-helper cells producing interleukin-17 (Th17 cells) by binding to Th17-associated gene promoters: regulates expression of the transcription factor RORC itself and RORC target genes such as IL17 (IL17A or IL17B). Also involved in differentiation of follicular T-helper cells (TfH) by directing expression of BCL6 and MAF. In B-cells, involved in class-switch recombination (CSR) by controlling the expression of both AICDA and of germline transcripts of the intervening heavy-chain region and constant heavy-chain region (I(H)-C(H)). Following infection, can participate in CD8(+) dendritic cell differentiation via interaction with IRF4 and IRF8 to mediate cooperative gene activation. Regulates effector CD8(+) T-cell differentiation by regulating expression of SIRT1. Following DNA damage, part of a differentiation checkpoint that limits self-renewal of hematopoietic stem cells (HSCs): up-regulated by STAT3, leading to differentiation of HSCs, thereby restricting self-renewal of HSCs. The sequence is that of Basic leucine zipper transcriptional factor ATF-like (Batf) from Mus musculus (Mouse).